The primary structure comprises 345 residues: Beta-2-glycoprotein 1 (345 aa).

A signal peptide spans 1–19 (MISPVLILFSSFLCHVAIA). 4 Sushi domains span residues 21-81 (RTCP…KCTP), 82-139 (RVCP…VCAP), 140-202 (ITCP…ECRE), and 203-262 (VKCP…SCKA). Disulfide bonds link Cys23-Cys66, Cys51-Cys79, Cys84-Cys124, Cys110-Cys137, Cys142-Cys188, Cys174-Cys200, Cys205-Cys248, Cys234-Cys260, Cys264-Cys315, Cys300-Cys325, and Cys307-Cys345. A glycan (O-linked (GalNAc...) threonine) is linked at Thr33. Residue Thr149 is glycosylated (O-linked (GalNAc...) threonine). Asn162, Asn183, and Asn193 each carry an N-linked (GlcNAc...) asparagine glycan. Asn253 carries an N-linked (GlcNAc...) asparagine glycan. A sushi-like region spans residues 263–345 (SCKVPVKKAT…KTDASDVKPC (83 aa)).

In terms of tissue distribution, expressed by the liver and secreted in plasma.

The protein resides in the secreted. Functionally, binds to various kinds of negatively charged substances such as heparin, phospholipids, and dextran sulfate. May prevent activation of the intrinsic blood coagulation cascade by binding to phospholipids on the surface of damaged cells. This Pan troglodytes (Chimpanzee) protein is Beta-2-glycoprotein 1 (APOH).